Here is a 380-residue protein sequence, read N- to C-terminus: DNA replication and repair protein RecF (380 aa).

Glycine 30 to threonine 37 is a binding site for ATP.

It belongs to the RecF family.

It is found in the cytoplasm. Functionally, the RecF protein is involved in DNA metabolism; it is required for DNA replication and normal SOS inducibility. RecF binds preferentially to single-stranded, linear DNA. It also seems to bind ATP. The protein is DNA replication and repair protein RecF of Mycobacterium sp. (strain KMS).